Consider the following 209-residue polypeptide: Lipid A acyltransferase PagP (209 aa).

Positions 1 to 24 are cleaved as a signal peptide; it reads MHLKRALITLSLITLPIIPFSSYA. Catalysis depends on residues His81, Asp124, and Ser125.

The protein belongs to the lipid A palmitoyltransferase family. As to quaternary structure, homodimer.

The protein resides in the cell outer membrane. The catalysed reaction is a lipid A + a 1,2-diacyl-sn-glycero-3-phosphocholine = a hepta-acyl lipid A + a 2-acyl-sn-glycero-3-phosphocholine. It carries out the reaction a lipid IVA + a 1,2-diacyl-sn-glycero-3-phosphocholine = a lipid IVB + a 2-acyl-sn-glycero-3-phosphocholine. It catalyses the reaction a lipid IIA + a 1,2-diacyl-sn-glycero-3-phosphocholine = a lipid IIB + a 2-acyl-sn-glycero-3-phosphocholine. Transfers a fatty acid residue from the sn-1 position of a phospholipid to the N-linked hydroxyfatty acid chain on the proximal unit of lipid A or its precursors. The polypeptide is Lipid A acyltransferase PagP (Pectobacterium parmentieri (strain WPP163) (Pectobacterium wasabiae (strain WPP163))).